The sequence spans 345 residues: AA9 family lytic polysaccharide monooxygenase D (345 aa).

Positions 1–21 (MPSFTSKTLLAALAGAAAVNA) are cleaved as a signal peptide. H22 and H107 together coordinate Cu(2+). C77 and C200 are joined by a disulfide. N-linked (GlcNAc...) asparagine glycosylation is present at N160. O2 is bound by residues H186 and Q195. Y197 provides a ligand contact to Cu(2+). Positions 315-345 (VQTSTRPISTRPQPTRCPGLGRRHLRKVARA) are disordered. Residues 318–327 (STRPISTRPQ) are compositionally biased toward polar residues. Residues 335–345 (GRRHLRKVARA) are compositionally biased toward basic residues.

The protein belongs to the polysaccharide monooxygenase AA9 family. Cu(2+) is required as a cofactor.

It localises to the secreted. It catalyses the reaction [(1-&gt;4)-beta-D-glucosyl]n+m + reduced acceptor + O2 = 4-dehydro-beta-D-glucosyl-[(1-&gt;4)-beta-D-glucosyl]n-1 + [(1-&gt;4)-beta-D-glucosyl]m + acceptor + H2O.. Its function is as follows. Lytic polysaccharide monooxygenase (LPMO) that depolymerizes crystalline and amorphous polysaccharides via the oxidation of scissile alpha- or beta-(1-4)-glycosidic bonds, yielding C1 or C4 oxidation products. Catalysis by LPMOs requires the reduction of the active-site copper from Cu(II) to Cu(I) by a reducing agent and H(2)O(2) or O(2) as a cosubstrate. In Podospora anserina (strain S / ATCC MYA-4624 / DSM 980 / FGSC 10383) (Pleurage anserina), this protein is AA9 family lytic polysaccharide monooxygenase D.